Reading from the N-terminus, the 102-residue chain is Small ribosomal subunit protein uS10 (102 aa).

It belongs to the universal ribosomal protein uS10 family. Part of the 30S ribosomal subunit.

Involved in the binding of tRNA to the ribosomes. The protein is Small ribosomal subunit protein uS10 of Methanocorpusculum labreanum (strain ATCC 43576 / DSM 4855 / Z).